Reading from the N-terminus, the 251-residue chain is uncharacterized protein (251 aa).

The protein to M.jannaschii MJ1311.

This is an uncharacterized protein from Methanocaldococcus jannaschii (strain ATCC 43067 / DSM 2661 / JAL-1 / JCM 10045 / NBRC 100440) (Methanococcus jannaschii).